A 338-amino-acid chain; its full sequence is Tetraacyldisaccharide 4'-kinase (338 aa).

63–70 (TVGGAGKT) is a binding site for ATP.

It belongs to the LpxK family.

The enzyme catalyses a lipid A disaccharide + ATP = a lipid IVA + ADP + H(+). It functions in the pathway glycolipid biosynthesis; lipid IV(A) biosynthesis; lipid IV(A) from (3R)-3-hydroxytetradecanoyl-[acyl-carrier-protein] and UDP-N-acetyl-alpha-D-glucosamine: step 6/6. Functionally, transfers the gamma-phosphate of ATP to the 4'-position of a tetraacyldisaccharide 1-phosphate intermediate (termed DS-1-P) to form tetraacyldisaccharide 1,4'-bis-phosphate (lipid IVA). The chain is Tetraacyldisaccharide 4'-kinase from Hahella chejuensis (strain KCTC 2396).